A 602-amino-acid polypeptide reads, in one-letter code: Elongation factor 4 (602 aa).

One can recognise a tr-type G domain in the interval 7 to 189 (KFIRNFSIIA…QLVVAIPPPV (183 aa)). Residues 19 to 24 (DHGKST) and 136 to 139 (NKID) each bind GTP.

It belongs to the TRAFAC class translation factor GTPase superfamily. Classic translation factor GTPase family. LepA subfamily.

It localises to the cell inner membrane. It catalyses the reaction GTP + H2O = GDP + phosphate + H(+). Functionally, required for accurate and efficient protein synthesis under certain stress conditions. May act as a fidelity factor of the translation reaction, by catalyzing a one-codon backward translocation of tRNAs on improperly translocated ribosomes. Back-translocation proceeds from a post-translocation (POST) complex to a pre-translocation (PRE) complex, thus giving elongation factor G a second chance to translocate the tRNAs correctly. Binds to ribosomes in a GTP-dependent manner. This chain is Elongation factor 4, found in Coxiella burnetii (strain RSA 493 / Nine Mile phase I).